Reading from the N-terminus, the 704-residue chain is Boron transporter 1 (704 aa).

Residues 1–35 (MEETFVPFEGIKNDLKGRLMCYKQDWTGGFKAGFR) lie on the Cytoplasmic side of the membrane. The helical transmembrane segment at 36 to 56 (ILAPTTYIFFASAIPVISFGE) threads the bilayer. The Extracellular portion of the chain corresponds to 57–75 (QLERSTDGVLTAVQTLAST). Residues 76–96 (AICGMIHSIIGGQPLLILGVA) traverse the membrane as a helical segment. Topologically, residues 97-120 (EPTVIMYTFMFNFAKARPELGRDL) are cytoplasmic. Residues 121–141 (FLAWSGWVCVWTALMLFVLAI) traverse the membrane as a helical segment. At 142–155 (CGACSIINRFTRVA) the chain is on the extracellular side. Residues 156-176 (GELFGLLIAMLFMQQAIKGLV) traverse the membrane as a helical segment. Over 177–195 (DEFRIPERENQKLKEFLPS) the chain is Cytoplasmic. Residues 196 to 216 (WRFANGMFALVLSFGLLLTGL) traverse the membrane as a helical segment. At 217 to 233 (RSRKARSWRYGTGWLRS) the chain is on the extracellular side. The chain crosses the membrane as a helical span at residues 234 to 254 (LIADYGVPLMVLVWTGVSYIP). Topologically, residues 255-289 (AGDVPKGIPRRLFSPNPWSPGAYGNWTVVKEMLDV) are cytoplasmic. The helical transmembrane segment at 290–310 (PIVYIIGAFIPASMIAVLYYF) threads the bilayer. At 311–337 (DHSVASQLAQQKEFNLRKPSSYHYDLL) the chain is on the extracellular side. Residues 338-358 (LLGFLTLMCGLLGVPPSNGVI) form a helical membrane-spanning segment. At 359–480 (PQSPMHTKSL…STMVGGCVAA (122 aa)) the chain is on the cytoplasmic side. Residues 481 to 501 (MPILKMIPTSVLWGYFAFMAI) form a helical membrane-spanning segment. Residues 502 to 557 (ESLPGNQFWERILLLFTAPSRRFKVLEDYHATFVETVPFKTIAMFTLFQTTYLLIC) are Extracellular-facing. The helical transmembrane segment at 558–578 (FGLTWIPIAGVMFPLMIMFLI) threads the bilayer. Residues 579–704 (PVRQYLLPRF…RSPLNQSSSN (126 aa)) are Cytoplasmic-facing. The tract at residues 641–704 (EFRHTSSPKV…RSPLNQSSSN (64 aa)) is disordered. Low complexity predominate over residues 647–664 (SPKVTSSSSTPVNNRSLS).

The protein belongs to the anion exchanger (TC 2.A.31.3) family. As to expression, expressed in proximal side of various root cells, notably in the columella, lateral root cap, epidermis and endodermis in tip and elongation zones of the root. Also detected in the epidermis, cortex, endodermis, and stele cells of the root hair zone. Observed in cotyledons and hypocotyls.

The protein localises to the cell membrane. Its subcellular location is the endosome membrane. It localises to the vacuole membrane. Functionally, efflux-type boron (B) transporter for xylem loading, responsive of boron translocation from roots to shoots under boron limitation. Boron is essential for maintaining the integrity of plants cell walls. In Arabidopsis thaliana (Mouse-ear cress), this protein is Boron transporter 1.